The sequence spans 160 residues: SsrA-binding protein (160 aa).

Positions 132–160 (KEFDKRDTMRERDSNRELQRAVRNKGKEE) are disordered.

The protein belongs to the SmpB family.

It is found in the cytoplasm. In terms of biological role, required for rescue of stalled ribosomes mediated by trans-translation. Binds to transfer-messenger RNA (tmRNA), required for stable association of tmRNA with ribosomes. tmRNA and SmpB together mimic tRNA shape, replacing the anticodon stem-loop with SmpB. tmRNA is encoded by the ssrA gene; the 2 termini fold to resemble tRNA(Ala) and it encodes a 'tag peptide', a short internal open reading frame. During trans-translation Ala-aminoacylated tmRNA acts like a tRNA, entering the A-site of stalled ribosomes, displacing the stalled mRNA. The ribosome then switches to translate the ORF on the tmRNA; the nascent peptide is terminated with the 'tag peptide' encoded by the tmRNA and targeted for degradation. The ribosome is freed to recommence translation, which seems to be the essential function of trans-translation. The chain is SsrA-binding protein from Pseudomonas putida (strain ATCC 47054 / DSM 6125 / CFBP 8728 / NCIMB 11950 / KT2440).